A 699-amino-acid polypeptide reads, in one-letter code: Elongation factor G 2 (699 aa).

The tr-type G domain occupies 8 to 290 (ERYRNIGICA…AVIEYLPSPT (283 aa)). GTP-binding positions include 17 to 24 (AHVDAGKT), 88 to 92 (DTPGH), and 142 to 145 (NKMD).

The protein belongs to the TRAFAC class translation factor GTPase superfamily. Classic translation factor GTPase family. EF-G/EF-2 subfamily.

Its subcellular location is the cytoplasm. Catalyzes the GTP-dependent ribosomal translocation step during translation elongation. During this step, the ribosome changes from the pre-translocational (PRE) to the post-translocational (POST) state as the newly formed A-site-bound peptidyl-tRNA and P-site-bound deacylated tRNA move to the P and E sites, respectively. Catalyzes the coordinated movement of the two tRNA molecules, the mRNA and conformational changes in the ribosome. In Colwellia psychrerythraea (strain 34H / ATCC BAA-681) (Vibrio psychroerythus), this protein is Elongation factor G 2.